Consider the following 223-residue polypeptide: DNA mismatch repair protein MutH (223 aa).

This sequence belongs to the MutH family.

The protein resides in the cytoplasm. Its function is as follows. Sequence-specific endonuclease that cleaves unmethylated GATC sequences. It is involved in DNA mismatch repair. This is DNA mismatch repair protein MutH from Shewanella baltica (strain OS223).